The sequence spans 181 residues: NADH-quinone oxidoreductase subunit B (181 aa).

Positions 45, 46, 111, and 140 each coordinate [4Fe-4S] cluster.

The protein belongs to the complex I 20 kDa subunit family. NDH-1 is composed of 14 different subunits. Subunits NuoB, C, D, E, F, and G constitute the peripheral sector of the complex. [4Fe-4S] cluster serves as cofactor.

The protein localises to the cell inner membrane. The enzyme catalyses a quinone + NADH + 5 H(+)(in) = a quinol + NAD(+) + 4 H(+)(out). In terms of biological role, NDH-1 shuttles electrons from NADH, via FMN and iron-sulfur (Fe-S) centers, to quinones in the respiratory chain. The immediate electron acceptor for the enzyme in this species is believed to be a menaquinone. Couples the redox reaction to proton translocation (for every two electrons transferred, four hydrogen ions are translocated across the cytoplasmic membrane), and thus conserves the redox energy in a proton gradient. In Flavobacterium psychrophilum (strain ATCC 49511 / DSM 21280 / CIP 103535 / JIP02/86), this protein is NADH-quinone oxidoreductase subunit B.